Reading from the N-terminus, the 313-residue chain is Formimidoylglutamase (313 aa).

Mn(2+) contacts are provided by histidine 130, aspartate 155, histidine 157, aspartate 159, aspartate 241, and aspartate 243.

Belongs to the arginase family. Mn(2+) is required as a cofactor.

It catalyses the reaction N-formimidoyl-L-glutamate + H2O = formamide + L-glutamate. The protein operates within amino-acid degradation; L-histidine degradation into L-glutamate; L-glutamate from N-formimidoyl-L-glutamate (hydrolase route): step 1/1. Its function is as follows. Catalyzes the conversion of N-formimidoyl-L-glutamate to L-glutamate and formamide. This Salmonella choleraesuis (strain SC-B67) protein is Formimidoylglutamase.